The chain runs to 332 residues: Fructose-1,6-bisphosphatase class 1 (332 aa).

Positions 92, 113, 115, and 116 each coordinate Mg(2+). Substrate is bound by residues 116 to 119, Asn-209, Tyr-242, and Lys-272; that span reads DGSS. A Mg(2+)-binding site is contributed by Glu-278.

The protein belongs to the FBPase class 1 family. Homotetramer. Mg(2+) is required as a cofactor.

It localises to the cytoplasm. The enzyme catalyses beta-D-fructose 1,6-bisphosphate + H2O = beta-D-fructose 6-phosphate + phosphate. It functions in the pathway carbohydrate biosynthesis; Calvin cycle. In Prosthecochloris aestuarii (strain DSM 271 / SK 413), this protein is Fructose-1,6-bisphosphatase class 1.